We begin with the raw amino-acid sequence, 680 residues long: NADPH--cytochrome P450 reductase (680 aa).

Residues 1–5 lie on the Lumenal side of the membrane; sequence MALDK. The helical transmembrane segment at 6–23 threads the bilayer; that stretch reads LDLYVIITLVVAIAAYFA. Residues 24–680 lie on the Cytoplasmic side of the membrane; it reads KNQFLDQQQD…VQNRYQEDVW (657 aa). The region spanning 60–204 is the Flavodoxin-like domain; it reads TLLLFGSQTG…DFLAWKDNVF (145 aa). FMN-binding positions include 66-71, 117-120, 152-161, and Asp-187; these read SQTGTA, ATYG, and LGNSTYEFFN. One can recognise an FAD-binding FR-type domain in the interval 264–509; sequence THPFLARIVK…NGPRGKFSKF (246 aa). Arg-283 is an NADP(+) binding site. Residues 439–442, 457–459, and 473–476 contribute to the FAD site; these read RYYS, TAV, and GVVT. Residues Thr-537, 599–600, 606–610, and Asp-642 each bind NADP(+); these read SR and KVYVQ. Trp-680 provides a ligand contact to FAD.

The protein belongs to the NADPH--cytochrome P450 reductase family. It in the N-terminal section; belongs to the flavodoxin family. This sequence in the C-terminal section; belongs to the flavoprotein pyridine nucleotide cytochrome reductase family. The cofactor is FAD. It depends on FMN as a cofactor.

The protein resides in the endoplasmic reticulum membrane. The protein localises to the mitochondrion outer membrane. It localises to the cell membrane. The catalysed reaction is 2 oxidized [cytochrome P450] + NADPH = 2 reduced [cytochrome P450] + NADP(+) + H(+). Functionally, this enzyme is required for electron transfer from NADP to cytochrome P450 in microsomes. It can also provide electron transfer to heme oxygenase and cytochrome B5. Involved in ergosterol biosynthesis. In Candida tropicalis (Yeast), this protein is NADPH--cytochrome P450 reductase.